The following is a 212-amino-acid chain: Large ribosomal subunit protein uL1 (212 aa).

This sequence belongs to the universal ribosomal protein uL1 family. In terms of assembly, part of the 50S ribosomal subunit.

Functionally, binds directly to 23S rRNA. Probably involved in E site tRNA release. Protein L1 is also a translational repressor protein, it controls the translation of its operon by binding to its mRNA. In Haloquadratum walsbyi (strain DSM 16790 / HBSQ001), this protein is Large ribosomal subunit protein uL1.